A 450-amino-acid polypeptide reads, in one-letter code: Involucrin (450 aa).

Residues 1–19 (MSQQHTLPVTLPPTLSQEL) show a composition bias toward polar residues. 3 disordered regions span residues 1 to 43 (MSQQ…LPAP), 77 to 370 (QLQQ…EQLK), and 422 to 450 (PGQVQDIQPPQPPKGEVLLPAEQQQEPEV). Over residues 86-108 (QEVHLAKHQELQELQEQELHLGK) the composition is skewed to basic and acidic residues. The span at 120–135 (GKQQQQQESQEQELYL) shows a compositional bias: low complexity. 2 stretches are compositionally biased toward basic and acidic residues: residues 187 to 200 (LGKRLEPQEQELHL) and 264 to 281 (QELHLGKRLEPQEQELHL). Positions 295-344 (GEAAAAGVTGAGPAASKAARRATGAGTAPGKAAAAAGATGAGTAATAPAT) are enriched in low complexity. A compositionally biased stretch (basic and acidic residues) spans 345–370 (AEERQKAESLEQQLEQEKAQREEQLK).

Belongs to the involucrin family. Directly or indirectly cross-linked to cornifelin (CNFN). Post-translationally, substrate of transglutaminase. Specific glutamines or lysines are cross-linked to keratins, desmoplakin and to inter involucrin molecules. Keratinocytes of epidermis and other stratified squamous epithelia.

It localises to the cytoplasm. Functionally, part of the insoluble cornified cell envelope (CE) of stratified squamous epithelia. The sequence is that of Involucrin (IVL) from Lemur catta (Ring-tailed lemur).